We begin with the raw amino-acid sequence, 138 residues long: Nucleoside diphosphate kinase (138 aa).

ATP is bound by residues lysine 10, phenylalanine 58, arginine 86, threonine 92, arginine 103, and asparagine 113. Histidine 116 (pros-phosphohistidine intermediate) is an active-site residue.

The protein belongs to the NDK family. In terms of assembly, homotetramer. Mg(2+) is required as a cofactor.

Its subcellular location is the cytoplasm. The enzyme catalyses a 2'-deoxyribonucleoside 5'-diphosphate + ATP = a 2'-deoxyribonucleoside 5'-triphosphate + ADP. The catalysed reaction is a ribonucleoside 5'-diphosphate + ATP = a ribonucleoside 5'-triphosphate + ADP. Its function is as follows. Major role in the synthesis of nucleoside triphosphates other than ATP. The ATP gamma phosphate is transferred to the NDP beta phosphate via a ping-pong mechanism, using a phosphorylated active-site intermediate. In Actinobacillus pleuropneumoniae serotype 7 (strain AP76), this protein is Nucleoside diphosphate kinase.